We begin with the raw amino-acid sequence, 45 residues long: Photosystem II reaction center protein K (45 aa).

A propeptide spanning residues 1–8 is cleaved from the precursor; that stretch reads MLMSLFLA. A helical membrane pass occupies residues 23 to 43; the sequence is ILPIIPLFFLLLAFVWQAAIG.

This sequence belongs to the PsbK family. As to quaternary structure, PSII is composed of 1 copy each of membrane proteins PsbA, PsbB, PsbC, PsbD, PsbE, PsbF, PsbH, PsbI, PsbJ, PsbK, PsbL, PsbM, PsbT, PsbX, PsbY, PsbZ, Psb30/Ycf12, at least 3 peripheral proteins of the oxygen-evolving complex and a large number of cofactors. It forms dimeric complexes.

It localises to the plastid. The protein localises to the cyanelle thylakoid membrane. In terms of biological role, one of the components of the core complex of photosystem II (PSII). PSII is a light-driven water:plastoquinone oxidoreductase that uses light energy to abstract electrons from H(2)O, generating O(2) and a proton gradient subsequently used for ATP formation. It consists of a core antenna complex that captures photons, and an electron transfer chain that converts photonic excitation into a charge separation. The sequence is that of Photosystem II reaction center protein K from Cyanophora paradoxa.